The following is a 379-amino-acid chain: Protein OSCP1 (379 aa).

As to expression, predominantly expressed in testis.

Its subcellular location is the basal cell membrane. May be involved in drug clearance in the placenta. The polypeptide is Protein OSCP1 (Oscp1) (Rattus norvegicus (Rat)).